A 317-amino-acid polypeptide reads, in one-letter code: Gluconeogenesis factor (317 aa).

Belongs to the gluconeogenesis factor family.

It is found in the cytoplasm. Its function is as follows. Required for morphogenesis under gluconeogenic growth conditions. Required, in gluconeogenic growth conditions, for the correct localization of PBP1 and hence for displaying a normal rod shape. In Bacillus subtilis (strain 168), this protein is Gluconeogenesis factor (mgfK).